A 97-amino-acid chain; its full sequence is Co-chaperonin GroES (97 aa).

It belongs to the GroES chaperonin family. In terms of assembly, heptamer of 7 subunits arranged in a ring. Interacts with the chaperonin GroEL.

The protein resides in the cytoplasm. Its function is as follows. Together with the chaperonin GroEL, plays an essential role in assisting protein folding. The GroEL-GroES system forms a nano-cage that allows encapsulation of the non-native substrate proteins and provides a physical environment optimized to promote and accelerate protein folding. GroES binds to the apical surface of the GroEL ring, thereby capping the opening of the GroEL channel. The sequence is that of Co-chaperonin GroES from Stenotrophomonas maltophilia (Pseudomonas maltophilia).